The chain runs to 179 residues: Large ribosomal subunit protein uL5 (179 aa).

The protein belongs to the universal ribosomal protein uL5 family. As to quaternary structure, part of the 50S ribosomal subunit; part of the 5S rRNA/L5/L18/L25 subcomplex. Contacts the 5S rRNA and the P site tRNA. Forms a bridge to the 30S subunit in the 70S ribosome.

Its function is as follows. This is one of the proteins that bind and probably mediate the attachment of the 5S RNA into the large ribosomal subunit, where it forms part of the central protuberance. In the 70S ribosome it contacts protein S13 of the 30S subunit (bridge B1b), connecting the 2 subunits; this bridge is implicated in subunit movement. Contacts the P site tRNA; the 5S rRNA and some of its associated proteins might help stabilize positioning of ribosome-bound tRNAs. This chain is Large ribosomal subunit protein uL5, found in Ruthia magnifica subsp. Calyptogena magnifica.